Reading from the N-terminus, the 869-residue chain is Probable beta-glucosidase F (869 aa).

A signal peptide spans 1–19 (MRVLSAIALVASLVPSALS). Residues asparagine 69, asparagine 77, and asparagine 261 are each glycosylated (N-linked (GlcNAc...) asparagine). Aspartate 289 is a catalytic residue. Asparagine 332, asparagine 364, asparagine 399, asparagine 425, and asparagine 478 each carry an N-linked (GlcNAc...) asparagine glycan. Positions 678–698 (AYPPTRPPKGPTPTYPTTIPN) are disordered. Residues 681–691 (PTRPPKGPTPT) are compositionally biased toward pro residues. N-linked (GlcNAc...) asparagine glycosylation is present at asparagine 728.

The protein belongs to the glycosyl hydrolase 3 family.

The protein resides in the secreted. It catalyses the reaction Hydrolysis of terminal, non-reducing beta-D-glucosyl residues with release of beta-D-glucose.. Its pathway is glycan metabolism; cellulose degradation. In terms of biological role, beta-glucosidases are one of a number of cellulolytic enzymes involved in the degradation of cellulosic biomass. Catalyzes the last step releasing glucose from the inhibitory cellobiose. The sequence is that of Probable beta-glucosidase F (bglF) from Neosartorya fischeri (strain ATCC 1020 / DSM 3700 / CBS 544.65 / FGSC A1164 / JCM 1740 / NRRL 181 / WB 181) (Aspergillus fischerianus).